Here is a 664-residue protein sequence, read N- to C-terminus: Probable L-type lectin-domain containing receptor kinase V.3 (664 aa).

A signal peptide spans 1–26 (MSMSCKINWLMVLVIIALSNLESSLG). At 27–278 (RLVFEGSAGL…YPKAESQVKL (252 aa)) the chain is on the extracellular side. Residues 28-250 (LVFEGSAGLM…AIHYMWMWYV (223 aa)) form a legume-lectin like region. 5 N-linked (GlcNAc...) asparagine glycosylation sites follow: Asn69, Asn116, Asn122, Asn174, and Asn197. Residues 279–299 (IVLVTFLTLALFVALAASALI) form a helical membrane-spanning segment. Over 300–664 (VFFYKRHKKL…LPSGRPRLFL (365 aa)) the chain is Cytoplasmic. The Protein kinase domain occupies 335–617 (NGFKQLLGEG…GVSELPDNLL (283 aa)). ATP-binding positions include 341-349 (LGEGGFGPV) and Lys364. Asp461 acts as the Proton acceptor in catalysis.

The protein in the C-terminal section; belongs to the protein kinase superfamily. Ser/Thr protein kinase family. In the N-terminal section; belongs to the leguminous lectin family.

Its subcellular location is the cell membrane. The catalysed reaction is L-seryl-[protein] + ATP = O-phospho-L-seryl-[protein] + ADP + H(+). It carries out the reaction L-threonyl-[protein] + ATP = O-phospho-L-threonyl-[protein] + ADP + H(+). The chain is Probable L-type lectin-domain containing receptor kinase V.3 (LECRK53) from Arabidopsis thaliana (Mouse-ear cress).